Consider the following 435-residue polypeptide: Zinc metalloproteinase/disintegrin (435 aa).

Positions 1–26 (KMCGVTQNWESYESTKKASQLNLTPE) are excised as a propeptide. Position 27 is a pyrrolidone carboxylic acid (glutamine 27). In terms of domain architecture, Peptidase M12B spans 33–227 (RYIKLGIFVD…HNFQCILNAP (195 aa)). An N-linked (GlcNAc...) asparagine glycan is attached at asparagine 115. 3 disulfide bridges follow: cysteine 144–cysteine 222, cysteine 184–cysteine 206, and cysteine 186–cysteine 189. Histidine 169 is a Zn(2+) binding site. Glutamate 170 is a catalytic residue. 2 residues coordinate Zn(2+): histidine 173 and histidine 179. Positions 228-243 (LRTDTVSTPVSGNELL) are excised as a propeptide. The Disintegrin domain occupies 235 to 318 (TPVSGNELLE…DCPTDDFHRN (84 aa)). Ca(2+) contacts are provided by valine 237, asparagine 240, leucine 242, glutamate 244, glutamate 247, and aspartate 250. Cystine bridges form between cysteine 249/cysteine 264, cysteine 251/cysteine 259, cysteine 258/cysteine 281, cysteine 272/cysteine 278, cysteine 277/cysteine 303, and cysteine 290/cysteine 310. Positions 296–298 (ECD) match the D/ECD-tripeptide motif.

Belongs to the venom metalloproteinase (M12B) family. P-III subfamily. P-IIIb sub-subfamily. As to quaternary structure, monomer. The cofactor is Zn(2+). Post-translationally, the N-terminus of the metalloproteinase is blocked. In terms of tissue distribution, expressed by the venom gland.

The protein resides in the secreted. Inhibited by EDTA. Functionally, cleaves the alpha chain of fibrinogen (FGA) preferentially and cleaves the beta chain (FGB) either on longer incubation or at high concentrations. Induces apoptosis of endothelial cells (prior to cell detachment). Its function is as follows. Disintegrin: inhibits platelet aggregation induced by ADP, thrombin, platelet-activating factor and collagen. Acts by inhibiting fibrinogen interaction with platelet receptors GPIIb/GPIIIa (ITGA2B/ITGB3). This is Zinc metalloproteinase/disintegrin from Craspedocephalus gramineus (Bamboo pit viper).